Reading from the N-terminus, the 391-residue chain is Heme A synthase (391 aa).

The next 8 helical transmembrane spans lie at I37–L57, R121–A141, L152–S172, L186–L206, T229–I249, F298–G318, L332–A352, and W354–A374. H300 serves as a coordination point for heme. H360 provides a ligand contact to heme.

The protein belongs to the COX15/CtaA family. Type 2 subfamily. As to quaternary structure, interacts with CtaB. The cofactor is heme b.

Its subcellular location is the cell membrane. The catalysed reaction is Fe(II)-heme o + 2 A + H2O = Fe(II)-heme a + 2 AH2. Its pathway is porphyrin-containing compound metabolism; heme A biosynthesis; heme A from heme O: step 1/1. Functionally, catalyzes the conversion of heme O to heme A by two successive hydroxylations of the methyl group at C8. The first hydroxylation forms heme I, the second hydroxylation results in an unstable dihydroxymethyl group, which spontaneously dehydrates, resulting in the formyl group of heme A. This is Heme A synthase from Cereibacter sphaeroides (strain ATCC 17025 / ATH 2.4.3) (Rhodobacter sphaeroides).